A 174-amino-acid polypeptide reads, in one-letter code: MASGDVLPRFYTVFLSCVSSNSLLIPRSYYEHLPRRLPKTAILTGTGGRVWKVAMMSKREQVYLARGWENFVADNELKDGEFLTFVFDGYKSYEVSIYGRGSCKETRAVVHVEEISDESESDNDSLGSLVDVTPMPAEENSDDTEGDNDSCDSVVDVTPMPVEEISDASDSDYY.

A DNA-binding region (TF-B3) is located at residues 8-101 (PRFYTVFLSC…SYEVSIYGRG (94 aa)). The segment at 114 to 174 (EISDESESDN…ISDASDSDYY (61 aa)) is disordered. Acidic residues-rich tracts occupy residues 139-150 (ENSDDTEGDNDS) and 164-174 (EISDASDSDYY).

It is found in the nucleus. This Arabidopsis thaliana (Mouse-ear cress) protein is B3 domain-containing protein At3g06220.